The chain runs to 650 residues: MDTNNCGVCKTIVNPGSERVKAGTSVFHAKCFVCKECKNELESFIRSKDGSLICDECDIKLNARKCFKCQLPIQSTIVTARGKSFHNDCFNCASCEKIIKGGFFFVEGEFYCSTCDAKPSDKTKTTTPPPSEIPLPGKSGVSLANGVEIQVPNNSTNIIYVLNTNESSNGLSSSGGSGNSISGSGGTNTGSSTSSFMIHKRNNSNELNVVTPTATTTVDLLTSSTTTTPTLSPSTLSPPISTARFSNDYLISLQDDIYAKQQQQLLLLQQQQIQIQQQLQQQQLEILQKNQSLLNSSSPSPSTSSTSSTSSISQSQNLNTSQPNITQQLSNLNISNQKNGEIEKYIPKINGKTLTELLKHQSFDDILGEVLSKKISIYKELSKEEVAFGDVIASGASGKVYKGIYKGRDVAIKVYSSENFCFNIEEFDREVTIMSLIDSDHPNFTRFYGANKQNKKYLFHVSELVKSGSLRDLLLDKEKPLAYFTQLSIASDIANAMKHLHSIGVIHRDLKSLNVLITEDFTAKVIDFGTSRNVDLAKQMTLNLGTSCYMSPELFKGNGYDETCDVYAFGIVLWEIIARKEPYENINSWSIPVLVAKGERPTIPADCPSEYSKLIKACWTDKPKKRPSFKEICDTLKKISESLTLKRNKK.

LIM zinc-binding domains lie at 4 to 63 (NNCG…KLNA) and 64 to 122 (RKCF…PSDK). 3 disordered regions span residues 118–138 (KPSD…LPGK), 171–197 (LSSS…SSFM), and 293–320 (LLNS…NLNT). Gly residues predominate over residues 173–188 (SSGGSGNSISGSGGTN). The 258-residue stretch at 386–643 (VAFGDVIASG…DTLKKISESL (258 aa)) folds into the Protein kinase domain. ATP-binding positions include 392-400 (IASGASGKV) and lysine 413. Residue aspartate 509 is the Proton acceptor of the active site.

Belongs to the protein kinase superfamily. TKL Ser/Thr protein kinase family.

The catalysed reaction is L-seryl-[protein] + ATP = O-phospho-L-seryl-[protein] + ADP + H(+). It carries out the reaction L-threonyl-[protein] + ATP = O-phospho-L-threonyl-[protein] + ADP + H(+). This chain is Probable LIM domain-containing serine/threonine-protein kinase DDB_G0287001, found in Dictyostelium discoideum (Social amoeba).